The following is a 284-amino-acid chain: RNase adapter protein RapZ (284 aa).

8 to 15 is a binding site for ATP; it reads GRSGSGKS. Residue 56–59 coordinates GTP; the sequence is DVRN. An RNA-binding region spans residues 266 to 284; the sequence is RSRGKNVQSRHRTLEKRKS.

Belongs to the RapZ-like family. RapZ subfamily. In terms of assembly, homotrimer.

Its function is as follows. Modulates the synthesis of GlmS, by affecting the processing and stability of the regulatory small RNA GlmZ. When glucosamine-6-phosphate (GlcN6P) concentrations are high in the cell, RapZ binds GlmZ and targets it to cleavage by RNase E. Consequently, GlmZ is inactivated and unable to activate GlmS synthesis. Under low GlcN6P concentrations, RapZ is sequestered and inactivated by an other regulatory small RNA, GlmY, preventing GlmZ degradation and leading to synthesis of GlmS. This is RNase adapter protein RapZ from Klebsiella oxytoca.